The chain runs to 305 residues: Dihydroorotate dehydrogenase B (NAD(+)), catalytic subunit (305 aa).

FMN contacts are provided by residues Ser23 and 47–48 (KG). Residues Lys47 and 71 to 75 (NAIGL) each bind substrate. FMN contacts are provided by Asn101 and Asn129. Position 129 (Asn129) interacts with substrate. Cys132 functions as the Nucleophile in the catalytic mechanism. Lys167 and Ile193 together coordinate FMN. 194 to 195 (NT) contributes to the substrate binding site. Residues Gly219, 245 to 246 (GG), and 267 to 268 (GT) each bind FMN.

This sequence belongs to the dihydroorotate dehydrogenase family. Type 1 subfamily. Heterotetramer of 2 PyrK and 2 PyrD type B subunits. Requires FMN as cofactor.

The protein resides in the cytoplasm. It carries out the reaction (S)-dihydroorotate + NAD(+) = orotate + NADH + H(+). The protein operates within pyrimidine metabolism; UMP biosynthesis via de novo pathway; orotate from (S)-dihydroorotate (NAD(+) route): step 1/1. In terms of biological role, catalyzes the conversion of dihydroorotate to orotate with NAD(+) as electron acceptor. The protein is Dihydroorotate dehydrogenase B (NAD(+)), catalytic subunit (pyrD) of Geobacter metallireducens (strain ATCC 53774 / DSM 7210 / GS-15).